Here is a 912-residue protein sequence, read N- to C-terminus: Protein translocase subunit SecA (912 aa).

Residues glutamine 86, 104–108, and aspartate 494 contribute to the ATP site; that span reads GEGKT. Residues 860-912 form a disordered region; that stretch reads EAPEKPAQLQYTAPGEDGASQTRVEGRSSGRSGNPAKAAQDGARKPAPKKKKR.

Belongs to the SecA family. Monomer and homodimer. Part of the essential Sec protein translocation apparatus which comprises SecA, SecYEG and auxiliary proteins SecDF. Other proteins may also be involved.

Its subcellular location is the cell membrane. It localises to the cytoplasm. The enzyme catalyses ATP + H2O + cellular proteinSide 1 = ADP + phosphate + cellular proteinSide 2.. Part of the Sec protein translocase complex. Interacts with the SecYEG preprotein conducting channel. Has a central role in coupling the hydrolysis of ATP to the transfer of proteins into and across the cell membrane, serving as an ATP-driven molecular motor driving the stepwise translocation of polypeptide chains across the membrane. The chain is Protein translocase subunit SecA from Arthrobacter sp. (strain FB24).